The primary structure comprises 286 residues: Versiconal hemiacetal acetate esterase stcI (286 aa).

The short motif at 54-56 is the Involved in the stabilization of the negatively charged intermediate by the formation of the oxyanion hole element; sequence HAG. Active-site residues include serine 123, aspartate 226, and histidine 256.

It belongs to the 'GDXG' lipolytic enzyme family.

The enzyme catalyses (2S,3S)-versiconal hemiacetal acetate + H2O = (2S-3S)-versiconal hemiacetal + acetate + H(+). The catalysed reaction is (3S)-versiconol acetate + H2O = (S)-versiconol + acetate + H(+). It functions in the pathway mycotoxin biosynthesis; sterigmatocystin biosynthesis. Its function is as follows. Esterase; part of the gene cluster that mediates the biosynthesis of sterigmatocystin (ST), a polyketide-derived furanocoumarin which is part of the most toxic and carcinogenic compounds among the known mycotoxins. The first step in the biosynthesis of sterigmatocystin is the production of hexanoate by the fatty acid synthase (FAS) units stcJ and stcK. The polyketide backbone is assembled by the non-reducing polyketide synthase stcA by condensation of the starter hexanoyl-CoA and 7 malonyl-CoA extender units followed by cyclization and release of norsolorinic acid. Norsolorinic acid is the first stable intermediate in the biosynthesis of sterigmatocystin and is converted into averantin (AVN) by the ketoreductase stcE which reduces the hexanoate ketone to an alcohol. Averantin is then oxidized into 5'-hydroxyaverantin (HAVN) by the cytochrome P450 monooxygenase stcF. 5'-hydroxyaverantin is further converted to 5'-oxyaverantin (OAVN) by the 5'-hydroxyaverantin dehydrogenase stcG. The next step is the conversion of OAVN into averufin (AVF) which is catalyzed by a yet to be identified enzyme. The cytochrome P450 monooxygenase stcB and the flavin-binding monooxygenase stcW are both required for the conversion of averufin to 1-hydroxyversicolorone. The esterase stcI probably catalyzes the formation of versiconal hemiacetal acetate from 1-hydroxyversicolorone. The oxydoreductase stcN then probably catalyzes the biosynthetic step from versiconal to versicolorin B (VERB). The next step is performed by the versicolorin B desaturase stcL to produce versicolorin A (VERA). The ketoreductase stcU and the cytochrome P450 monooxygenase stcS are involved in the conversion of versicolorin A to demethylsterigmatocystin. The Baeyer-Villiger oxidas stcQ and the reductase stcR might be involved in the biosynthetic step from versicolorin A to demethylsterigmatocystin. The final step in the biosynthesis of sterigmatocystin is the methylation of demethylsterigmatocystin catalyzed by the methyltransferase stcP. The polypeptide is Versiconal hemiacetal acetate esterase stcI (Emericella nidulans (strain FGSC A4 / ATCC 38163 / CBS 112.46 / NRRL 194 / M139) (Aspergillus nidulans)).